Consider the following 209-residue polypeptide: COP9 signalosome complex subunit 8 (209 aa).

The region spanning 8-179 is the PCI domain; sequence ESAFSFKKLL…GALDVSFNKF (172 aa). S175 carries the phosphoserine modification.

The protein belongs to the CSN8 family. Component of the CSN complex, composed of COPS1/GPS1, COPS2, COPS3, COPS4, COPS5, COPS6, COPS7 (COPS7A or COPS7B), COPS8 and COPS9 isoform 1. In the complex, it probably interacts directly with COPS3, COPS4 and COPS7 (COPS7A or COPS7B).

The protein resides in the cytoplasm. The protein localises to the nucleus. Component of the COP9 signalosome complex (CSN), a complex involved in various cellular and developmental processes. The CSN complex is an essential regulator of the ubiquitin (Ubl) conjugation pathway by mediating the deneddylation of the cullin subunits of SCF-type E3 ligase complexes, leading to decrease the Ubl ligase activity of SCF-type complexes such as SCF, CSA or DDB2. The complex is also involved in phosphorylation of p53/TP53, c-jun/JUN, IkappaBalpha/NFKBIA, ITPK1 and IRF8/ICSBP, possibly via its association with CK2 and PKD kinases. CSN-dependent phosphorylation of TP53 and JUN promotes and protects degradation by the Ubl system, respectively. The chain is COP9 signalosome complex subunit 8 (COPS8) from Homo sapiens (Human).